A 308-amino-acid polypeptide reads, in one-letter code: MSTKMEQPFYHDDSFLVGYGHNDAALHDYKLQKQSMNLNLTEPYRNLKSDLYHTSGADSGSLKLASPELERLIIQTSNGVLTTPTPGQYLYSRGITDEQEGFAEGFVKALDDLHKMFQMPPPNVSIGAGGVTTCSTTASVFGSSLQSEPPIYTLNAYCPAPSHPSTTISYLPPHVQQSQHPENTHGFQHSGVLPQRYVPLKEEPQTVPDMHSSDCSPPTSPIDMENQERIKAERKRLRNRLAATKCRKRKLERISRLEEKVKVLKNDNAGLSNTASVLRDQVAQLKQKVLRHMNSGCQLMLTSKMEAF.

The basic motif stretch occupies residues 229-256; it reads RIKAERKRLRNRLAATKCRKRKLERISR. In terms of domain architecture, bZIP spans 229–292; it reads RIKAERKRLR…AQLKQKVLRH (64 aa). A leucine-zipper region spans residues 257-285; that stretch reads LEEKVKVLKNDNAGLSNTASVLRDQVAQL.

This sequence belongs to the bZIP family. Jun subfamily. Binds DNA as a homodimer or as a heterodimer with another member of the jun/fos family.

The protein localises to the nucleus. Transcription factor involved in regulating gene activity following the primary growth factor response. Binds to the DNA sequence 5'-TGA[CG]TCA-3'. The protein is Transcription factor JunB (junb) of Cyprinus carpio (Common carp).